The primary structure comprises 279 residues: Digeranylgeranylglyceryl phosphate synthase (279 aa).

Helical transmembrane passes span 14-34 (VKNC…ASNF), 36-56 (FGLI…CGFG), 94-114 (LMIS…IALI), 131-153 (IIGN…ASVG), 157-175 (ITLI…REII), 201-221 (IFVA…PYIL), 224-244 (FGAP…LAVL), and 259-279 (SKYI…GSLM).

Belongs to the UbiA prenyltransferase family. DGGGP synthase subfamily. It depends on Mg(2+) as a cofactor.

The protein localises to the cell membrane. It carries out the reaction sn-3-O-(geranylgeranyl)glycerol 1-phosphate + (2E,6E,10E)-geranylgeranyl diphosphate = 2,3-bis-O-(geranylgeranyl)-sn-glycerol 1-phosphate + diphosphate. It participates in membrane lipid metabolism; glycerophospholipid metabolism. Its function is as follows. Prenyltransferase that catalyzes the transfer of the geranylgeranyl moiety of geranylgeranyl diphosphate (GGPP) to the C2 hydroxyl of (S)-3-O-geranylgeranylglyceryl phosphate (GGGP). This reaction is the second ether-bond-formation step in the biosynthesis of archaeal membrane lipids. In Methanococcus aeolicus (strain ATCC BAA-1280 / DSM 17508 / OCM 812 / Nankai-3), this protein is Digeranylgeranylglyceryl phosphate synthase.